The following is a 1195-amino-acid chain: DNA-directed RNA polymerase subunit Rpo2 (1195 aa).

Residues 894 to 909 are compositionally biased toward basic and acidic residues; it reads LEEGEERLGPQRRRES. Positions 894 to 914 are disordered; that stretch reads LEEGEERLGPQRRRESSVTMR. The Zn(2+) site is built by Cys-1135, Cys-1140, Cys-1155, and Cys-1158.

It belongs to the RNA polymerase beta chain family. In terms of assembly, part of the RNA polymerase complex. The cofactor is Zn(2+).

Its subcellular location is the cytoplasm. It carries out the reaction RNA(n) + a ribonucleoside 5'-triphosphate = RNA(n+1) + diphosphate. Functionally, DNA-dependent RNA polymerase (RNAP) catalyzes the transcription of DNA into RNA using the four ribonucleoside triphosphates as substrates. This subunit is involved in DNA promoter recognition. The sequence is that of DNA-directed RNA polymerase subunit Rpo2 from Thermoplasma acidophilum (strain ATCC 25905 / DSM 1728 / JCM 9062 / NBRC 15155 / AMRC-C165).